The chain runs to 157 residues: Small ribosomal subunit protein uS9 (157 aa).

It belongs to the universal ribosomal protein uS9 family.

In Caulobacter vibrioides (strain ATCC 19089 / CIP 103742 / CB 15) (Caulobacter crescentus), this protein is Small ribosomal subunit protein uS9.